The primary structure comprises 161 residues: uncharacterized protein (161 aa).

This is an uncharacterized protein from Homo sapiens (Human).